A 440-amino-acid chain; its full sequence is D-serine dehydratase (440 aa).

N6-(pyridoxal phosphate)lysine is present on Lys116.

The protein belongs to the serine/threonine dehydratase family. DsdA subfamily. Monomer. Requires pyridoxal 5'-phosphate as cofactor.

The enzyme catalyses D-serine = pyruvate + NH4(+). This is D-serine dehydratase from Salmonella arizonae (strain ATCC BAA-731 / CDC346-86 / RSK2980).